Consider the following 352-residue polypeptide: Nuclear receptor subfamily 1 group I member 3 (352 aa).

The segment at residues 8–83 (LRNCVVCGDQ…AGMRKDMILS (76 aa)) is a DNA-binding region (nuclear receptor). The NR C4-type zinc-finger motif lies at 11 to 31 (CVVCGDQATGYHFNALTCEGC). Phosphothreonine; by PKC is present on Thr38. The NR C4-type zinc finger occupies 47–71 (CPFAGSCEVSKTQRRHCPACRLQKC). The region spanning 109-352 (EQEELIRTLL…MMPLLQEICS (244 aa)) is the NR LBD domain.

Belongs to the nuclear hormone receptor family. NR1 subfamily. As to quaternary structure, interacts with ECT2. Heterodimer of NR1I3 and RXR. Interacts with PSMC4. Directly interacts with DNAJC7. The DNAJC7-NR1I3 complex may also include HSP90. Interacts with CRY1. Interacts with CRY2 in a ligand-dependent manner. Post-translationally, phosphorylated at Thr-38 by PKC, dephosphorylation of Thr-38 is required for nuclear translocation and activation. Predominantly expressed in liver.

Its subcellular location is the nucleus. The protein localises to the cytoplasm. It is found in the cytoskeleton. Its function is as follows. Binds and transactivates the retinoic acid response elements that control expression of the retinoic acid receptor beta 2 and alcohol dehydrogenase 3 genes. Transactivates both the phenobarbital responsive element module of the human CYP2B6 gene and the CYP3A4 xenobiotic response element. The sequence is that of Nuclear receptor subfamily 1 group I member 3 (NR1I3) from Homo sapiens (Human).